Reading from the N-terminus, the 361-residue chain is dTDP-glucose 4,6-dehydratase (361 aa).

Residues 11 to 12, 32 to 35, 58 to 59, 80 to 84, and T99 each bind NAD(+); these read FI, DKLT, DI, and LAAES. A substrate-binding site is contributed by S84. T133 is a binding site for substrate. Catalysis depends on D134, which acts as the Proton donor. Catalysis depends on proton acceptor residues E135 and Y167. 167 to 171 is a binding site for NAD(+); sequence YSASK. N196 is a binding site for substrate. N197 is a binding site for NAD(+). Residues 206-207, 222-224, R231, N266, and 296-300 each bind substrate; these read KL, PIY, and DRPGH.

Belongs to the NAD(P)-dependent epimerase/dehydratase family. dTDP-glucose dehydratase subfamily. Homodimer. NAD(+) is required as a cofactor.

The catalysed reaction is dTDP-alpha-D-glucose = dTDP-4-dehydro-6-deoxy-alpha-D-glucose + H2O. Its pathway is carbohydrate biosynthesis; dTDP-L-rhamnose biosynthesis. It functions in the pathway bacterial outer membrane biogenesis; LPS O-antigen biosynthesis. Functionally, catalyzes the dehydration of dTDP-D-glucose to form dTDP-6-deoxy-D-xylo-4-hexulose via a three-step process involving oxidation, dehydration and reduction. The sequence is that of dTDP-glucose 4,6-dehydratase (rfbB) from Escherichia coli.